The chain runs to 204 residues: Ribonuclease HII (204 aa).

The RNase H type-2 domain maps to 17 to 204; it reads TLIAGVDEVG…KPVKKVLGLL (188 aa). A divalent metal cation is bound by residues aspartate 23, glutamate 24, and aspartate 115.

It belongs to the RNase HII family. Mn(2+) is required as a cofactor. Requires Mg(2+) as cofactor.

The protein localises to the cytoplasm. It catalyses the reaction Endonucleolytic cleavage to 5'-phosphomonoester.. In terms of biological role, endonuclease that specifically degrades the RNA of RNA-DNA hybrids. The protein is Ribonuclease HII of Psychromonas ingrahamii (strain DSM 17664 / CCUG 51855 / 37).